The following is a 367-amino-acid chain: DNA replication and repair protein RecF (367 aa).

30–37 (GANGSGKT) is a binding site for ATP.

It belongs to the RecF family.

The protein resides in the cytoplasm. In terms of biological role, the RecF protein is involved in DNA metabolism; it is required for DNA replication and normal SOS inducibility. RecF binds preferentially to single-stranded, linear DNA. It also seems to bind ATP. The sequence is that of DNA replication and repair protein RecF from Pseudomonas entomophila (strain L48).